A 620-amino-acid chain; its full sequence is Probable potassium transport system protein Kup 1 (620 aa).

12 consecutive transmembrane segments (helical) span residues 7–27 (GIGL…TSPL), 50–70 (VLSL…VIVI), 102–122 (MMLG…TPAI), 136–156 (PDLK…LFAI), 168–188 (FGPV…ANIV), 211–231 (LMSF…EALY), 246–266 (WFGL…ALLI), 284–304 (MVVP…QAVI), 336–356 (IYVP…VVGF), 368–388 (IAVT…AALL), 393–413 (PVVV…FFAA), and 415–435 (IIKV…SFTV).

This sequence belongs to the HAK/KUP transporter (TC 2.A.72) family.

The protein resides in the cell inner membrane. It carries out the reaction K(+)(in) + H(+)(in) = K(+)(out) + H(+)(out). In terms of biological role, transport of potassium into the cell. Likely operates as a K(+):H(+) symporter. This Rhodopseudomonas palustris (strain ATCC BAA-98 / CGA009) protein is Probable potassium transport system protein Kup 1.